The primary structure comprises 49 residues: Large ribosomal subunit protein bL33B (49 aa).

Belongs to the bacterial ribosomal protein bL33 family.

The polypeptide is Large ribosomal subunit protein bL33B (Limosilactobacillus reuteri subsp. reuteri (strain JCM 1112) (Lactobacillus reuteri)).